The primary structure comprises 798 residues: Nucleolin homolog 1 (798 aa).

The tract at residues 1 to 548 is disordered; sequence MGFDSPRGRG…IISEEERRRQ (548 aa). Over residues 8-34 the composition is skewed to gly residues; sequence GRGGGGFRGGRGGGSGFTPRGGGGGFR. Composition is skewed to basic and acidic residues over residues 59-75, 88-98, and 106-116; these read GGDRGRSPGGFRGDREG, GGDRGGFRGGD, and GGDRGNFRGGD. Composition is skewed to gly residues over residues 150–164 and 171–184; these read RGGGRGGFTPRGRGG and GGRGNFQSRGGGSR. 4 stretches are compositionally biased toward acidic residues: residues 196–205, 226–242, 258–278, and 287–317; these read SDGDDDEEEE, DDSGEDEEDEEESDEEP, EDSDDDEEDDDEEEEESDDDA, and VEEDEEDEEDEEEIEMDEEDEEEEEDEEETE. Positions 328 to 350 are enriched in polar residues; sequence SLKSVDSTKGKQVNLSKVATPTT. 2 stretches are compositionally biased toward acidic residues: residues 378 to 404 and 424 to 450; these read DDDSDEEDEEDEEVEEEDEEEEEEEED and IEEDSDDEDEDEEEEEDEEDEEEEEDT. A compositionally biased stretch (low complexity) spans 467 to 476; sequence AANRAAASAA. Residues 478–504 show a composition bias toward acidic residues; that stretch reads DSDEDEDEEDEEDVEEEDEEEEEEEDI. A compositionally biased stretch (basic and acidic residues) spans 532 to 548; the sequence is VKSDGKSIISEEERRRQ. In terms of domain architecture, RRM spans 638–713; it reads LQLFINALPG…HLVDVFYARH (76 aa). A disordered region spans residues 736 to 798; it reads PKVAADSSGD…FKKTGFKGKK (63 aa). The span at 743–762 shows a compositional bias: acidic residues; the sequence is SGDDSEEVASSDEGIQEVEE. Residues 783-798 show a composition bias toward basic residues; that stretch reads QQKKPQFKKTGFKGKK.

Identified in an mRNP granule complex containing untranslated mRNAs.

It localises to the nucleus. The protein resides in the nucleolus. Nucleolin is the major nucleolar protein of growing eukaryotic cells. It is found associated with intranucleolar chromatin and pre-ribosomal particles. It induces chromatin decondensation by binding to histone H1. It is thought to play a role in pre-rRNA transcription and ribosome assembly. May play a role in the process of transcriptional elongation. Involved in phase separation into sub-nucleolar condensates. This Caenorhabditis elegans protein is Nucleolin homolog 1.